The following is a 523-amino-acid chain: Calcium-dependent protein kinase 1 (523 aa).

The disordered stretch occupies residues 1 to 36 (MGCNQSKSANDVRGNKVNHVNSKKKNNKREDTNDGE). G2 carries N-myristoyl glycine lipidation. Residue C3 is the site of S-palmitoyl cysteine attachment. Positions 57 to 324 (YFKVRKLGSG…AEEALNSRWI (268 aa)) constitute a Protein kinase domain. ATP contacts are provided by residues 63–71 (LGSGAYGEV), K86, and K90. S65 carries the post-translational modification Phosphoserine. At S117 the chain carries Phosphoserine. The Proton acceptor role is filled by D190. Phosphoserine is present on residues S216 and S219. T230 is modified (phosphothreonine). Residue S334 is modified to Phosphoserine. Positions 345–352 (NMRKFEGS) match the J domain autoinhibitory motif motif. The j domain stretch occupies residues 345-363 (NMRKFEGSQKLAQAAILFI). Residues 353 to 363 (QKLAQAAILFI) carry the J domain interacts with the EF-hand domains motif. EF-hand domains lie at 371-406 (EERK…LRNF), 415-450 (NVEE…KQIL), 451-486 (FSEE…TSIS), and 487-520 (EKTW…ICDH). 20 residues coordinate Ca(2+): D384, N386, D388, Q390, E395, D428, D430, N432, Y434, E439, D464, D466, S468, K470, E475, D498, N500, D502, M504, and E509.

This sequence belongs to the protein kinase superfamily. Ser/Thr protein kinase family. CDPK subfamily. In terms of assembly, monomer. Mg(2+) serves as cofactor. In terms of processing, myristoylated. Myristoylation and palmitoylation are required for the localization to the parasitophorous vacuole membrane. Post-translationally, palmitoylated. Palmitoylation increases in merozoites in response to low level of extracellular K(+) in the host blood. Myristoylation and palmitoylation are required for the localization to the parasitophorous vacuole membrane. Phosphorylation at Thr-230 may regulate CDPK1 kinase activity. Phosphorylation increases in response to an increase in intracellular Ca(2+) levels. Autophosphorylated in vitro. Autophosphorylation does not affect membrane localization in vitro.

The protein resides in the membrane. Its subcellular location is the cell membrane. The protein localises to the parasitophorous vacuole membrane. It is found in the cytoplasm. It localises to the cell projection. The protein resides in the cilium. Its subcellular location is the flagellum. The protein localises to the host cell membrane. It catalyses the reaction L-seryl-[protein] + ATP = O-phospho-L-seryl-[protein] + ADP + H(+). It carries out the reaction L-threonyl-[protein] + ATP = O-phospho-L-threonyl-[protein] + ADP + H(+). With respect to regulation, activated by calcium. Upon calcium binding to the EF-hand domains, the C-terminus of the junction domain (J domain) undergoes a conformational change which results in the dissociation of the pseudo-substrate inhibitory motif from the catalytic domain. This, in turn may facilitate the autophosphorylation of the activation loop at Thr-230, which leads to the kinase activation. In terms of biological role, calcium-dependent protein kinase which acts as a sensor and effector of intracellular Ca(2+) levels probably in part downstream of cGMP-activated PKG kinase. During the liver stage, involved in sporozoite motility and thus in sporozoite invasion of host hepatocytes, probably together with CDPK4 and CDPK5. In the mosquito midgut and during the last stage of male gamete exflagellation, may play a role in the rupture of the host erythrocyte membrane. In the mosquito midgut, required for the differentiation of the zygote into the ookinete by promoting the translational activation of a subset of repressed mRNAs; these mRNAs are kept repressed in the zygote by the DOZI- or CITH-containing mRNP complexes. Dispensable during the asexual blood stage. This is Calcium-dependent protein kinase 1 from Plasmodium berghei (strain Anka).